The chain runs to 391 residues: Formate-dependent phosphoribosylglycinamide formyltransferase (391 aa).

N(1)-(5-phospho-beta-D-ribosyl)glycinamide contacts are provided by residues 20-21 (EL) and Glu80. Residues Arg112, Lys153, 158-163 (SSGKGQ), 193-196 (EGFI), and Glu201 contribute to the ATP site. The 190-residue stretch at 117–306 (RLAAETLGLP…EFALHVRAIL (190 aa)) folds into the ATP-grasp domain. Glu265 and Glu277 together coordinate Mg(2+). N(1)-(5-phospho-beta-D-ribosyl)glycinamide contacts are provided by residues Asp284, Lys354, and 361 to 362 (RR).

The protein belongs to the PurK/PurT family. Homodimer.

The enzyme catalyses N(1)-(5-phospho-beta-D-ribosyl)glycinamide + formate + ATP = N(2)-formyl-N(1)-(5-phospho-beta-D-ribosyl)glycinamide + ADP + phosphate + H(+). It functions in the pathway purine metabolism; IMP biosynthesis via de novo pathway; N(2)-formyl-N(1)-(5-phospho-D-ribosyl)glycinamide from N(1)-(5-phospho-D-ribosyl)glycinamide (formate route): step 1/1. In terms of biological role, involved in the de novo purine biosynthesis. Catalyzes the transfer of formate to 5-phospho-ribosyl-glycinamide (GAR), producing 5-phospho-ribosyl-N-formylglycinamide (FGAR). Formate is provided by PurU via hydrolysis of 10-formyl-tetrahydrofolate. The sequence is that of Formate-dependent phosphoribosylglycinamide formyltransferase from Shewanella sp. (strain ANA-3).